A 1363-amino-acid chain; its full sequence is Vascular endothelial growth factor receptor 3 (1363 aa).

Residues 1–24 (MQRGAALCLRLWLCLGLLDGLVSG) form the signal peptide. At 25-775 (YSMTPPTLNI…EGSEDKGSME (751 aa)) the chain is on the extracellular side. Ig-like C2-type domains follow at residues 30–127 (PTLN…TAAS), 151–213 (KDAM…WGDQ), 219–326 (PFLV…TEVI), 331–415 (PFIS…ISLE), 422–552 (PQIH…FYVT), 555–671 (PDGF…KYLS), and 678–764 (PRLT…ASVA). 6 N-linked (GlcNAc...) asparagine glycosylation sites follow: N33, N104, N166, N251, N299, and N411. Intrachain disulfides connect C51–C111 and C158–C206. A disulfide bridge links C252 with C310. 3 disulfide bridges follow: C445–C534, C466–C486, and C578–C653. N-linked (GlcNAc...) asparagine glycosylation is found at N515, N527, N594, N683, and N690. A disulfide bridge links C699 with C751. N-linked (GlcNAc...) asparagine glycosylation is present at N758. A helical membrane pass occupies residues 776 to 796 (IVILVGTGVIAVFFWVLLLLI). Over 797 to 1363 (FCNMRRPAHA…RVTFFTDNSY (567 aa)) the chain is Cytoplasmic. Residues Y830, Y833, and Y853 each carry the phosphotyrosine; by SRC modification. The Protein kinase domain occupies 845–1173 (LHLGRVLGYG…ELVEILGDLL (329 aa)). ATP contacts are provided by residues 851-859 (LGYGAFGKV) and K879. D1037 (proton acceptor) is an active-site residue. The residue at position 1063 (Y1063) is a Phosphotyrosine; by autocatalysis and SRC. Y1068, Y1230, Y1231, and Y1265 each carry phosphotyrosine; by autocatalysis. Positions 1291-1331 (HRQESGFSCKGPGQNVAVTRAHPDSQGRRRRPERGARGGQV) are disordered. Phosphotyrosine; by autocatalysis and SRC occurs at positions 1333 and 1337. The residue at position 1363 (Y1363) is a Phosphotyrosine; by autocatalysis.

The protein belongs to the protein kinase superfamily. Tyr protein kinase family. CSF-1/PDGF receptor subfamily. As to quaternary structure, interacts with VEGFC and VEGFD. Monomer in the absence of bound VEGFC or VEGFD. Homodimer in the presence of bound VEGFC or VEGFD. Can also form a heterodimer with KDR. Interacts with PTPN14; the interaction is enhanced by stimulation with VEGFC. Interacts with CRK, GRB2, PTK2/FAK1, SHC1, PIK3R1 and PTPN11/SHP-2. Identified in a complex with SRC and ITGB1. Autophosphorylated on tyrosine residues upon ligand binding. Autophosphorylation occurs in trans, i.e. one subunit of the dimeric receptor phosphorylates tyrosine residues on the other subunit. Phosphorylation in response to H(2)O(2) is mediated by a process that requires SRC and PRKCD activity. Phosphorylation at Tyr-1068 is required for autophosphorylation at additional tyrosine residues. Phosphorylation at Tyr-1063 and Tyr-1337 is important for interaction with CRK and subsequent activation of MAPK8. Phosphorylation at Tyr-1230, Tyr-1231 and Tyr-1337 is important for interaction with GRB2 and subsequent activation of the AKT1 and MAPK1/ERK2 and/or MAPK3/ERK1 signaling pathways. In response to endothelial cell adhesion onto collagen, can also be phosphorylated in the absence of FLT4 kinase activity by SRC at Tyr-830, Tyr-833, Tyr-853, Tyr-1063, Tyr-1333, and Tyr-1337. As to expression, detected in endothelial cells (at protein level). Widely expressed. Detected in fetal spleen, lung and brain. Detected in adult liver, muscle, thymus, placenta, lung, testis, ovary, prostate, heart, and kidney.

It is found in the cell membrane. It localises to the cytoplasm. The protein resides in the nucleus. The protein localises to the secreted. It catalyses the reaction L-tyrosyl-[protein] + ATP = O-phospho-L-tyrosyl-[protein] + ADP + H(+). Present in an inactive conformation in the absence of bound ligand. Binding of VEGFC or VEGFD leads to dimerization and activation by autophosphorylation on tyrosine residues. Inhibited by MAZ51. Its function is as follows. Tyrosine-protein kinase that acts as a cell-surface receptor for VEGFC and VEGFD, and plays an essential role in adult lymphangiogenesis and in the development of the vascular network and the cardiovascular system during embryonic development. Promotes proliferation, survival and migration of endothelial cells, and regulates angiogenic sprouting. Signaling by activated FLT4 leads to enhanced production of VEGFC, and to a lesser degree VEGFA, thereby creating a positive feedback loop that enhances FLT4 signaling. Modulates KDR signaling by forming heterodimers. The secreted isoform 3 may function as a decoy receptor for VEGFC and/or VEGFD and play an important role as a negative regulator of VEGFC-mediated lymphangiogenesis and angiogenesis. Binding of vascular growth factors to isoform 1 or isoform 2 leads to the activation of several signaling cascades; isoform 2 seems to be less efficient in signal transduction, because it has a truncated C-terminus and therefore lacks several phosphorylation sites. Mediates activation of the MAPK1/ERK2, MAPK3/ERK1 signaling pathway, of MAPK8 and the JUN signaling pathway, and of the AKT1 signaling pathway. Phosphorylates SHC1. Mediates phosphorylation of PIK3R1, the regulatory subunit of phosphatidylinositol 3-kinase. Promotes phosphorylation of MAPK8 at 'Thr-183' and 'Tyr-185', and of AKT1 at 'Ser-473'. This is Vascular endothelial growth factor receptor 3 (FLT4) from Homo sapiens (Human).